Reading from the N-terminus, the 672-residue chain is SHC SH2 domain-binding protein 1 (672 aa).

Position 2 is an N-acetylalanine (A2). At S5 the chain carries Phosphoserine. At T7 the chain carries Phosphothreonine. Phosphoserine is present on residues S31, S42, S44, S47, and S273. 5 PbH1 repeats span residues 428-451, 452-473, 474-496, 497-518, and 526-548; these read GADI…LIVH, RGKT…TVRT, SAEF…EIYP, GSQC…LIKD, and IPKI…VLVK. S634 bears the Phosphoserine mark.

In terms of assembly, interacts directly with isoform p52shc of SHC1 via its SH2 domain. Interacts with TRIM71; leading to enhanced SHCBP1 protein stability. Interacts with both members of the centralspindlin complex, KIF23 and RACGAP1.

Its subcellular location is the midbody. The protein resides in the cytoplasm. It is found in the cytoskeleton. It localises to the spindle. May play a role in signaling pathways governing cellular proliferation, cell growth and differentiation. May be a component of a novel signaling pathway downstream of Shc. Acts as a positive regulator of FGF signaling in neural progenitor cells. This Homo sapiens (Human) protein is SHC SH2 domain-binding protein 1 (SHCBP1).